Consider the following 45-residue polypeptide: Large ribosomal subunit protein bL36 (45 aa).

The tract at residues 1–45 (MKVSSSIKADPSKGDKLVRRKGRLYVINKKDPNRKQRQAGPARKK) is disordered.

Belongs to the bacterial ribosomal protein bL36 family.

The protein is Large ribosomal subunit protein bL36 of Chlamydia caviae (strain ATCC VR-813 / DSM 19441 / 03DC25 / GPIC) (Chlamydophila caviae).